The primary structure comprises 52 residues: UPF0391 membrane protein Avin_10980 (52 aa).

A run of 2 helical transmembrane segments spans residues Trp4–Ala24 and Gly29–Gly49.

It belongs to the UPF0391 family.

It is found in the cell membrane. This is UPF0391 membrane protein Avin_10980 from Azotobacter vinelandii (strain DJ / ATCC BAA-1303).